A 113-amino-acid chain; its full sequence is Ig kappa chain V-II region 17S29.1 (113 aa).

The segment at 1 to 23 (DIVMTQAVFSNPVTLGTSASISC) is framework-1. C23 and C93 are disulfide-bonded. Residues 24-39 (RSSKSLLHSNGITYLY) form a complementarity-determining-1 region. The tract at residues 40–54 (WYLQKPGQSPQLLLY) is framework-2. The complementarity-determining-2 stretch occupies residues 55 to 61 (QMSNLAS). Positions 62–93 (GVPDRFSSSGSGTDFTLRISRVEAEDVGVYYC) are framework-3. Positions 94 to 102 (AHNLELPYT) are complementarity-determining-3. Residues 103-112 (FGGGTKLEIK) are framework-4.

Functionally, anti-streptococcal group A carbohydrate antibody. The polypeptide is Ig kappa chain V-II region 17S29.1 (Mus musculus (Mouse)).